A 373-amino-acid chain; its full sequence is Chaperone protein DnaJ (373 aa).

Residues 5–70 (DYYEVLGVAK…QKRAAYDRYG (66 aa)) form the J domain. Residues 133–211 (GFDTEIRVPS…CDGVGRTRRN (79 aa)) form a CR-type zinc finger. Residues C146, C149, C163, C166, C185, C188, C199, and C202 each coordinate Zn(2+). 4 CXXCXGXG motif repeats span residues 146–153 (CDTCHGSG), 163–170 (CRTCGGSG), 185–192 (CPTCHGTG), and 199–206 (CPSCDGVG).

This sequence belongs to the DnaJ family. Homodimer. The cofactor is Zn(2+).

Its subcellular location is the cytoplasm. Participates actively in the response to hyperosmotic and heat shock by preventing the aggregation of stress-denatured proteins and by disaggregating proteins, also in an autonomous, DnaK-independent fashion. Unfolded proteins bind initially to DnaJ; upon interaction with the DnaJ-bound protein, DnaK hydrolyzes its bound ATP, resulting in the formation of a stable complex. GrpE releases ADP from DnaK; ATP binding to DnaK triggers the release of the substrate protein, thus completing the reaction cycle. Several rounds of ATP-dependent interactions between DnaJ, DnaK and GrpE are required for fully efficient folding. Also involved, together with DnaK and GrpE, in the DNA replication of plasmids through activation of initiation proteins. The polypeptide is Chaperone protein DnaJ (Bordetella bronchiseptica (strain ATCC BAA-588 / NCTC 13252 / RB50) (Alcaligenes bronchisepticus)).